Reading from the N-terminus, the 331-residue chain is Tryptophan--tRNA ligase (331 aa).

ATP contacts are provided by residues 10 to 12 (QPS) and 18 to 19 (GN). Residues 11-19 (PSGQLTLGN) carry the 'HIGH' region motif. D133 provides a ligand contact to L-tryptophan. Residues 145–147 (GED), V184, and 193–197 (KMSKS) each bind ATP. A 'KMSKS' region motif is present at residues 193 to 197 (KMSKS).

The protein belongs to the class-I aminoacyl-tRNA synthetase family. Homodimer.

The protein resides in the cytoplasm. It carries out the reaction tRNA(Trp) + L-tryptophan + ATP = L-tryptophyl-tRNA(Trp) + AMP + diphosphate + H(+). Its function is as follows. Catalyzes the attachment of tryptophan to tRNA(Trp). The sequence is that of Tryptophan--tRNA ligase from Listeria monocytogenes serovar 1/2a (strain ATCC BAA-679 / EGD-e).